We begin with the raw amino-acid sequence, 431 residues long: Magnetosome protein MamH (431 aa).

Helical transmembrane passes span 21-41 (LLSA…PLFL), 57-77 (ANVQ…LGYL), 86-106 (IIVA…LSPW), 107-127 (IGGA…IMSA), 156-176 (TAFM…QIPA), 178-198 (AGIA…AWLA), 243-263 (MVFV…LIKV), 274-294 (ILIG…RSFI), 302-321 (AVLL…GFII), 358-378 (LLGS…IFFV), and 380-400 (VGGF…TGVG).

The protein belongs to the major facilitator superfamily.

The protein localises to the magnetosome membrane. In terms of biological role, required for correct biomineralization of the magnetosome; probably transports some form of iron. Partially functionally redundant with MamZ. In Paramagnetospirillum magneticum (strain ATCC 700264 / AMB-1) (Magnetospirillum magneticum), this protein is Magnetosome protein MamH (mamH).